Consider the following 342-residue polypeptide: Holliday junction branch migration complex subunit RuvB (342 aa).

The segment at 1–185 (MTVKPLRDVT…FPIQERLEYY (185 aa)) is large ATPase domain (RuvB-L). Residues Leu-24, Arg-25, Gly-66, Lys-69, Thr-70, Ser-71, 132-134 (EDY), Arg-175, Tyr-185, and Arg-222 each bind ATP. Residue Thr-70 participates in Mg(2+) binding. The tract at residues 186-256 (GPAELKEIAV…VVDRTLRRLE (71 aa)) is small ATPAse domain (RuvB-S). Positions 259-342 (ARGLDAMDRR…RPGGKQGSLV (84 aa)) are head domain (RuvB-H). DNA contacts are provided by Arg-314 and Arg-319.

The protein belongs to the RuvB family. Homohexamer. Forms an RuvA(8)-RuvB(12)-Holliday junction (HJ) complex. HJ DNA is sandwiched between 2 RuvA tetramers; dsDNA enters through RuvA and exits via RuvB. An RuvB hexamer assembles on each DNA strand where it exits the tetramer. Each RuvB hexamer is contacted by two RuvA subunits (via domain III) on 2 adjacent RuvB subunits; this complex drives branch migration. In the full resolvosome a probable DNA-RuvA(4)-RuvB(12)-RuvC(2) complex forms which resolves the HJ.

It is found in the cytoplasm. The enzyme catalyses ATP + H2O = ADP + phosphate + H(+). Its function is as follows. The RuvA-RuvB-RuvC complex processes Holliday junction (HJ) DNA during genetic recombination and DNA repair, while the RuvA-RuvB complex plays an important role in the rescue of blocked DNA replication forks via replication fork reversal (RFR). RuvA specifically binds to HJ cruciform DNA, conferring on it an open structure. The RuvB hexamer acts as an ATP-dependent pump, pulling dsDNA into and through the RuvAB complex. RuvB forms 2 homohexamers on either side of HJ DNA bound by 1 or 2 RuvA tetramers; 4 subunits per hexamer contact DNA at a time. Coordinated motions by a converter formed by DNA-disengaged RuvB subunits stimulates ATP hydrolysis and nucleotide exchange. Immobilization of the converter enables RuvB to convert the ATP-contained energy into a lever motion, pulling 2 nucleotides of DNA out of the RuvA tetramer per ATP hydrolyzed, thus driving DNA branch migration. The RuvB motors rotate together with the DNA substrate, which together with the progressing nucleotide cycle form the mechanistic basis for DNA recombination by continuous HJ branch migration. Branch migration allows RuvC to scan DNA until it finds its consensus sequence, where it cleaves and resolves cruciform DNA. The sequence is that of Holliday junction branch migration complex subunit RuvB from Anaeromyxobacter sp. (strain K).